A 496-amino-acid chain; its full sequence is Pseudooxynicotine dehydrogenase (496 aa).

Residues Met1 to Ala42 constitute a signal peptide (tat-type signal). The FAD site is built by Ala69, Glu88, Arg96, Trp113, Val285, Ser461, and Ile471.

This sequence belongs to the flavin monoamine oxidase family. In terms of assembly, homodimer. FAD is required as a cofactor. Post-translationally, predicted to be exported by the Tat system. The position of the signal peptide cleavage has not been experimentally proven.

It is found in the periplasm. The enzyme catalyses pseudooxynicotine + 2 Fe(III)-[cytochrome c] + H2O = 4-oxo-4-(pyridin-3-yl)butanal + methylamine + 2 Fe(II)-[cytochrome c] + 2 H(+). Its pathway is alkaloid degradation; nicotine degradation. Strongly inhibited by Na(2)MoO(4) and FeCl(3). Activity is nearly twice as high in the presence of Na(2)WO(4). Functionally, involved in nicotine degradation. Catalyzes the deamination of pseudooxynicotine to 3-succinoylsemialdehyde-pyridine. Functions as a dehydrogenase that uses the c-type cytochrome protein CycN as the physiological electron acceptor. O(2) is a poor electron acceptor. Pnao is oxidized by CycN 230 times faster than O(2) at equivalent oxidant concentrations. The polypeptide is Pseudooxynicotine dehydrogenase (Pseudomonas putida (strain DSM 28022 / S16)).